The following is a 148-amino-acid chain: Snaclec 27 (148 aa).

Positions 1 to 23 (WGDSSSSASACWSCFSLVSGIGA) are cleaved as a signal peptide. Intrachain disulfides connect cysteine 27-cysteine 38, cysteine 55-cysteine 144, and cysteine 121-cysteine 136. The C-type lectin domain occupies 34–145 (HEGHCYKVFS…CSSTQQFVCK (112 aa)).

The protein belongs to the snaclec family. As to quaternary structure, heterodimer; disulfide-linked. In terms of tissue distribution, expressed by the venom gland.

It is found in the secreted. Functionally, interferes with one step of hemostasis (modulation of platelet aggregation, or coagulation cascade, for example). In Echis ocellatus (Ocellated saw-scaled viper), this protein is Snaclec 27.